Reading from the N-terminus, the 442-residue chain is GTPase Obg (442 aa).

The Obg domain occupies 1–158; it reads MFYDQARIFV…HWLELELKLL (158 aa). In terms of domain architecture, OBG-type G spans 159–329; it reads ADVGLVGFPN…LIYHVHKGLE (171 aa). GTP is bound by residues 165 to 172, 190 to 194, 212 to 215, 282 to 285, and 310 to 312; these read GFPNVGKS, FTTLE, DIPG, NKMD, and SAA. 2 residues coordinate Mg(2+): S172 and T192. The OCT domain maps to 349-427; sequence FTGKTEERFK…IGDLDFDFIE (79 aa).

Belongs to the TRAFAC class OBG-HflX-like GTPase superfamily. OBG GTPase family. In terms of assembly, monomer. Requires Mg(2+) as cofactor.

It is found in the cytoplasm. An essential GTPase which binds GTP, GDP and possibly (p)ppGpp with moderate affinity, with high nucleotide exchange rates and a fairly low GTP hydrolysis rate. Plays a role in control of the cell cycle, stress response, ribosome biogenesis and in those bacteria that undergo differentiation, in morphogenesis control. The sequence is that of GTPase Obg from Heliobacterium modesticaldum (strain ATCC 51547 / Ice1).